We begin with the raw amino-acid sequence, 111 residues long: Viscotoxin-A3 (111 aa).

The signal sequence occupies residues 1–26 (MEVVRGSSLVLLVLLLGALLVSQVES). Disulfide bonds link Cys-29–Cys-66, Cys-30–Cys-58, and Cys-42–Cys-52. The propeptide at 73–111 (FYCTLGCESSQCATNSNGDAEAVRCKTACSDLCQDVDDA) is acidic domain.

This sequence belongs to the plant thionin (TC 1.C.44) family.

The protein localises to the secreted. In terms of biological role, thionins are small plant proteins which are toxic to animal cells. They seem to exert their toxic effect at the level of the cell membrane. Their precise function is not known. This chain is Viscotoxin-A3 (THI2.1), found in Viscum album (European mistletoe).